A 276-amino-acid polypeptide reads, in one-letter code: Protein-glutamine gamma-glutamyltransferase (276 aa).

Belongs to the bacillus TGase family.

The catalysed reaction is L-glutaminyl-[protein] + L-lysyl-[protein] = [protein]-L-lysyl-N(6)-5-L-glutamyl-[protein] + NH4(+). In terms of biological role, probably plays a role in the assembly of the spore coat proteins by catalyzing epsilon-(gamma-glutamyl)lysine cross-links. In Bacillus mycoides (strain KBAB4) (Bacillus weihenstephanensis), this protein is Protein-glutamine gamma-glutamyltransferase.